Consider the following 236-residue polypeptide: 3-deoxy-D-manno-octulosonic acid kinase (236 aa).

The active site involves aspartate 167.

It belongs to the protein kinase superfamily. KdkA/RfaP family.

It is found in the cell inner membrane. It carries out the reaction an alpha-Kdo-(2-&gt;6)-lipid IVA + ATP = a 4-O-phospho-alpha-Kdo-(2-&gt;6)-lipid IVA + ADP + H(+). It participates in bacterial outer membrane biogenesis; LPS core biosynthesis. Catalyzes the ATP-dependent phosphorylation of the 3-deoxy-D-manno-octulosonic acid (Kdo) residue in Kdo-lipid IV(A) at the 4-OH position. The sequence is that of 3-deoxy-D-manno-octulosonic acid kinase from Vibrio vulnificus (strain YJ016).